Here is a 508-residue protein sequence, read N- to C-terminus: MDEKTKKAEEMALSLARAVTGGDEQAAIKYATWLAEQKVPLRVQVKPEVSPTQDIRLCVSVEDAYMHTVTIWLTVRPDMTVASLKDMVFLDYGFPPSLQQWVVGQRLARDQETLHSHGIRRNGDSAYLYLLSARNTSLNPQELQRQRQLRMLEDLGFKDLTLQPRGPLEPVLPKPRTHQETGQPDAAPESPPVGWQCPGCTFINKPTRPGCEMCCRARPEAYQIPASYQPDEEERARLAGEEEALRQYEQRKQQQQEGNYLQHVQLEQRSLVLNTEPAECPVCYSVLAPGEAVVLRECLHTFCRECLQGTIRNSQEAEVSCPFIDNTYSCPGKLLEREIRALLSPEDYQRFLDLGVSIAENRSTLSYHCKTPDCRGWCFFEDDVNEFTCPVCTRVNCLLCKAIHERMNCREYQDDLAHRARNDVAAQQTTEMLRVMLQQGEAMYCPQCRIVVQKKDGCDWIRCTVCHTEICWVTKGPRWGPGGPGDTSGGCRCRVNGIPCHPSCQNCH.

Position 1 is an N-acetylmethionine (Met-1). The interval Met-1–Arg-218 is interaction with IRF3. Positions Met-1–Gln-268 are interaction with TAB2. Ser-50 bears the Phosphoserine mark. A Ubiquitin-like domain is found at Ile-55–Ile-119. The segment at Val-69 to Leu-131 is interaction with RNF31. The segment at Thr-161–Pro-191 is disordered. The segment at Pro-188–Glu-220 adopts a RanBP2-type zinc-finger fold. Positions Asp-231 to Tyr-260 form a coiled coil. Residues Glu-276 to Cys-504 are TRIAD supradomain. Residues Cys-280, Cys-283, Cys-298, His-300, Cys-303, Cys-306, and Cys-321 each coordinate Zn(2+). Residues Cys-280 to Cys-330 form an RING-type 1 zinc finger. Phosphotyrosine is present on Tyr-328. Residues Cys-330, Cys-369, Cys-374, Cys-389, Cys-392, Cys-397, Cys-400, His-404, Cys-409, Cys-445, and Cys-448 each contribute to the Zn(2+) site. The IBR-type zinc finger occupies Gln-349 to Cys-409. An RING-type 2; atypical zinc finger spans residues Cys-445–Thr-474. Residue Cys-458 is part of the active site. Residues Cys-463 and Cys-466 each contribute to the Zn(2+) site.

The protein belongs to the RBR family. As to quaternary structure, component of the LUBAC complex (linear ubiquitin chain assembly complex) which consists of SHARPIN, RBCK1 and RNF31. LUBAC has a MW of approximately 600 kDa suggesting a heteromultimeric assembly of its subunits. Interacts with beta-I-type (PRKCB1) and zeta-type protein kinase C (PRKCZ). Interacts with UBE2L3. Interacts with IREB2 only in iron-rich conditions. Associates with the TNF-R1 signaling complex (TNF-RSC) in a stimulation-dependent manner. Interacts with EYA1, TAB2, TAB3, MAP3K7 TRAF6 and RIPK1. Interacts with IRF3. Post-translationally, auto-ubiquitinated. Auto-ubiquitination leads to degradation by the proteasome. In terms of processing, phosphorylated. In vitro, phosphorylation inhibits auto-ubiquitination activity. As to expression, widely expressed.

It carries out the reaction [E2 ubiquitin-conjugating enzyme]-S-ubiquitinyl-L-cysteine + [acceptor protein]-L-lysine = [E2 ubiquitin-conjugating enzyme]-L-cysteine + [acceptor protein]-N(6)-ubiquitinyl-L-lysine.. It participates in protein modification; protein ubiquitination. E3 ubiquitin-protein ligase, which accepts ubiquitin from specific E2 ubiquitin-conjugating enzymes, such as UBE2L3/UBCM4, and then transfers it to substrates. Functions as an E3 ligase for oxidized IREB2 and both heme and oxygen are necessary for IREB2 ubiquitination. Promotes ubiquitination of TAB2 and IRF3 and their degradation by the proteasome. Component of the LUBAC complex which conjugates linear ('Met-1'-linked) polyubiquitin chains to substrates and plays a key role in NF-kappa-B activation and regulation of inflammation. LUBAC conjugates linear polyubiquitin to IKBKG and RIPK1 and is involved in activation of the canonical NF-kappa-B and the JNK signaling pathways. Linear ubiquitination mediated by the LUBAC complex interferes with TNF-induced cell death and thereby prevents inflammation. LUBAC is recruited to the TNF-R1 signaling complex (TNF-RSC) following polyubiquitination of TNF-RSC components by BIRC2 and/or BIRC3 and to conjugate linear polyubiquitin to IKBKG and possibly other components contributing to the stability of the complex. The LUBAC complex is also involved in innate immunity by conjugating linear polyubiquitin chains at the surface of bacteria invading the cytosol to form the ubiquitin coat surrounding bacteria. LUBAC is not able to initiate formation of the bacterial ubiquitin coat, and can only promote formation of linear polyubiquitins on pre-existing ubiquitin. The bacterial ubiquitin coat acts as an 'eat-me' signal for xenophagy and promotes NF-kappa-B activation. Together with OTULIN, the LUBAC complex regulates the canonical Wnt signaling during angiogenesis. Binds polyubiquitin of different linkage types. The polypeptide is RanBP-type and C3HC4-type zinc finger-containing protein 1 (Rbck1) (Rattus norvegicus (Rat)).